The primary structure comprises 173 residues: MARMNRPAPVEVTYKNMRFLITHNPTNATLNKFIEELKKYGVTTIVRVCEATYDTALVEKEGIHVLDWPFDDGAPPSNQIVDGWLSLVKIKFREEPGCCIAVHCVAGLGRAPVLVALALIEGGMKYEDAVQFIRQKRRGAFNSKQLLYLEKYRPKMRLRFKDSNGHRNNCCIQ.

One can recognise a Tyrosine-protein phosphatase domain in the interval 8-161 (APVEVTYKNM…YRPKMRLRFK (154 aa)). An intrachain disulfide couples cysteine 49 to cysteine 104. The active-site Proton donor is aspartate 72. Residues 97 to 132 (GCCIAVHCVAGLGRAPVLVALALIEGGMKYEDAVQF) form an interaction with ATF5 region. Cysteine 104 functions as the Phosphocysteine intermediate in the catalytic mechanism. 105 to 110 (VAGLGR) lines the phosphate pocket. Arginine 110 contacts substrate. A Cysteine methyl ester modification is found at cysteine 170. A lipid anchor (S-farnesyl cysteine) is attached at cysteine 170. The propeptide at 171–173 (CIQ) is removed in mature form.

Belongs to the protein-tyrosine phosphatase family. In terms of assembly, homotrimer. Interacts with ATF5 and tubulin. In terms of processing, farnesylated. Farnesylation is required for membrane targeting.

The protein localises to the cell membrane. The protein resides in the early endosome. Its subcellular location is the endoplasmic reticulum. It is found in the cytoplasm. It localises to the cytoskeleton. The protein localises to the spindle. The protein resides in the nucleus. The enzyme catalyses O-phospho-L-tyrosyl-[protein] + H2O = L-tyrosyl-[protein] + phosphate. With respect to regulation, inhibited by sodium orthovanadate and pentamidine. In terms of biological role, protein tyrosine phosphatase which stimulates progression from G1 into S phase during mitosis. May play a role in the development and maintenance of differentiating epithelial tissues. The polypeptide is Protein tyrosine phosphatase type IVA 1 (PTP4A1) (Pongo abelii (Sumatran orangutan)).